Reading from the N-terminus, the 915-residue chain is MFNCAVTAIDLTPMPLLSTDNMTTAPLSLSTDTSLIEKSLFGIPEWLLQINDDISRALERGVNIRQLVSARACVIDDLLIGLFKWFELDKTDLALFATGGYGRGELSLHSDIDILLLMPHEIDADTSSKIDNLVALLWDIGLEPALSVRSVSECLEAALDHTIASALLEARLLIGNETLQDVPHQIVNNQWSPRAFYDVKIDEAKARYLQHNATEYNLEPNIKTAPGGLRDIHIVGWVTKRYFRVSKLYDLVQQNFLTEKEFDELSFSEGYLWQIRHYLHELTGRNENKLLFDYQREIAQLMGYDTQPDDQPNAAVERFMRDYYRCAMQISTLSEMLTNHYYETIIEPQLPDEERPKKQPINARFNQVGEQIAMAHHRVFAQHPESILEMFLLMGQYGIKNVRTHTLRALKIAARGIDQAYRDNPTHQTLFLANLKEQNYLFHRLRTMNRYGVLGNYIPAFAQVTGLMQYDLFHRYTVDAHTLFLIRILHRFIDPHFYEDFPLVSSIFQRIERKEILVLAAMFHDIAKGRGGNHSQLGEIESIEFCLAHGMSNADANLVGWLTRYHLLMSMTAQKKDISDPEVVTLFADLVGNVTHLNHLYVLTVADMNATNPQLWNSWRATLMKQLYSQTRRILRADIDAPTNRQDMISATRKQALMMLDNVDNQHMNRDEVLSLWDDLGDEYFLREIAEDILWHTEAILNHPPIGRASNADSPPLVVLREHRELALDAVQVFVYTQDQVNLFAVTMAVFDQMNLDVLDARIITATRDFALDSYVLLDRSGTLLVDSDSQQELKQRLIDAFKNPTAPKLTHKRIPRQLKHFDVETTINFEFNDASSQHIMSLETLDQPGLLARVGQVFLQQQIEVHAARITTLGERAEDMFYISDQNDQALSANKLKTLKTALIESLSVHNDSI.

Positions 1-360 (MFNCAVTAID…PDEERPKKQP (360 aa)) are uridylyltransferase. A uridylyl-removing region spans residues 361-731 (INARFNQVGE…EHRELALDAV (371 aa)). Positions 478 to 594 (VDAHTLFLIR…TLFADLVGNV (117 aa)) constitute an HD domain. ACT domains follow at residues 732 to 817 (QVFV…RIPR) and 840 to 915 (IMSL…NDSI).

Belongs to the GlnD family. The cofactor is Mg(2+).

The enzyme catalyses [protein-PII]-L-tyrosine + UTP = [protein-PII]-uridylyl-L-tyrosine + diphosphate. The catalysed reaction is [protein-PII]-uridylyl-L-tyrosine + H2O = [protein-PII]-L-tyrosine + UMP + H(+). With respect to regulation, uridylyltransferase (UTase) activity is inhibited by glutamine, while glutamine activates uridylyl-removing (UR) activity. In terms of biological role, modifies, by uridylylation and deuridylylation, the PII regulatory proteins (GlnB and homologs), in response to the nitrogen status of the cell that GlnD senses through the glutamine level. Under low glutamine levels, catalyzes the conversion of the PII proteins and UTP to PII-UMP and PPi, while under higher glutamine levels, GlnD hydrolyzes PII-UMP to PII and UMP (deuridylylation). Thus, controls uridylylation state and activity of the PII proteins, and plays an important role in the regulation of nitrogen assimilation and metabolism. The chain is Bifunctional uridylyltransferase/uridylyl-removing enzyme from Psychrobacter arcticus (strain DSM 17307 / VKM B-2377 / 273-4).